Here is a 475-residue protein sequence, read N- to C-terminus: Chromosomal replication initiator protein DnaA (475 aa).

The segment at 1–73 is domain I, interacts with DnaA modulators; it reads MSDIEQERWS…LACWQAELPD (73 aa). The tract at residues 73-131 is domain II; sequence DVHRIDLMVRSAMRCAAPAKEAPAADPRRPEHGDGRASTELKMVATAPASANHDALGGS. The domain III, AAA+ region stretch occupies residues 132–354; sequence PLDPRLTFAS…GAINRLLAHS (223 aa). Gly179, Gly181, Lys182, and Thr183 together coordinate ATP. The tract at residues 355–475 is domain IV, binds dsDNA; the sequence is KLNAQPVTLE…VELLKRQLQE (121 aa).

The protein belongs to the DnaA family. As to quaternary structure, oligomerizes as a right-handed, spiral filament on DNA at oriC.

Its subcellular location is the cytoplasm. Functionally, plays an essential role in the initiation and regulation of chromosomal replication. ATP-DnaA binds to the origin of replication (oriC) to initiate formation of the DNA replication initiation complex once per cell cycle. Binds the DnaA box (a 9 base pair repeat at the origin) and separates the double-stranded (ds)DNA. Forms a right-handed helical filament on oriC DNA; dsDNA binds to the exterior of the filament while single-stranded (ss)DNA is stabiized in the filament's interior. The ATP-DnaA-oriC complex binds and stabilizes one strand of the AT-rich DNA unwinding element (DUE), permitting loading of DNA polymerase. After initiation quickly degrades to an ADP-DnaA complex that is not apt for DNA replication. Binds acidic phospholipids. The protein is Chromosomal replication initiator protein DnaA of Nitrobacter hamburgensis (strain DSM 10229 / NCIMB 13809 / X14).